Reading from the N-terminus, the 183-residue chain is Threonylcarbamoyl-AMP synthase (183 aa).

The 183-residue stretch at 1–183 folds into the YrdC-like domain; the sequence is MNIQQIVEQL…LFTHQLFRQG (183 aa).

This sequence belongs to the SUA5 family. TsaC subfamily.

Its subcellular location is the cytoplasm. It carries out the reaction L-threonine + hydrogencarbonate + ATP = L-threonylcarbamoyladenylate + diphosphate + H2O. Its function is as follows. Required for the formation of a threonylcarbamoyl group on adenosine at position 37 (t(6)A37) in tRNAs that read codons beginning with adenine. Catalyzes the conversion of L-threonine, HCO(3)(-)/CO(2) and ATP to give threonylcarbamoyl-AMP (TC-AMP) as the acyladenylate intermediate, with the release of diphosphate. The polypeptide is Threonylcarbamoyl-AMP synthase (Pasteurella multocida (strain Pm70)).